The primary structure comprises 202 residues: Na(+)-translocating NADH-quinone reductase subunit E (202 aa).

6 helical membrane passes run 11 to 31 (AVFV…FIAI), 35 to 55 (VETA…TMPV), 79 to 99 (LSFL…QILE), 114 to 134 (GVFL…LFMV), 144 to 164 (TVYG…LAGI), and 180 to 200 (LGIT…FSGV).

It belongs to the NqrDE/RnfAE family. In terms of assembly, composed of six subunits; NqrA, NqrB, NqrC, NqrD, NqrE and NqrF.

It localises to the cell inner membrane. It carries out the reaction a ubiquinone + n Na(+)(in) + NADH + H(+) = a ubiquinol + n Na(+)(out) + NAD(+). In terms of biological role, NQR complex catalyzes the reduction of ubiquinone-1 to ubiquinol by two successive reactions, coupled with the transport of Na(+) ions from the cytoplasm to the periplasm. NqrA to NqrE are probably involved in the second step, the conversion of ubisemiquinone to ubiquinol. The polypeptide is Na(+)-translocating NADH-quinone reductase subunit E (Ectopseudomonas mendocina (strain ymp) (Pseudomonas mendocina)).